Reading from the N-terminus, the 496-residue chain is Putative (R)-citramalate synthase CimA (496 aa).

The region spanning V3 to Y253 is the Pyruvate carboxyltransferase domain.

Belongs to the alpha-IPM synthase/homocitrate synthase family. In terms of assembly, homodimer.

The enzyme catalyses pyruvate + acetyl-CoA + H2O = (3R)-citramalate + CoA + H(+). Its pathway is amino-acid biosynthesis; L-isoleucine biosynthesis; 2-oxobutanoate from pyruvate: step 1/3. Its function is as follows. Catalyzes the condensation of pyruvate and acetyl-coenzyme A to form (R)-citramalate. The chain is Putative (R)-citramalate synthase CimA from Methanothermobacter thermautotrophicus (strain ATCC 29096 / DSM 1053 / JCM 10044 / NBRC 100330 / Delta H) (Methanobacterium thermoautotrophicum).